We begin with the raw amino-acid sequence, 488 residues long: BRAP2 RING ZnF UBP domain-containing protein 1 (488 aa).

An RING-type; degenerate zinc finger spans residues Cys174–Arg214. Residues Leu208–Cys301 form a UBP-type; degenerate zinc finger. Zn(2+) contacts are provided by Cys225, Cys228, Cys237, Cys240, Cys245, His252, His256, and His262. Residues Glu370 to Arg418 are a coiled coil. The segment at Met453 to Lys488 is disordered. The segment covering Val465–Val478 has biased composition (low complexity). Residues Arg479 to Lys488 show a composition bias toward basic residues.

As to quaternary structure, component of the heteromeric E3 ligase complex made of BRIZ1 and BRIZ2. Forms heterooligomers with BRIZ2 via coiled-coil domains.

The catalysed reaction is S-ubiquitinyl-[E2 ubiquitin-conjugating enzyme]-L-cysteine + [acceptor protein]-L-lysine = [E2 ubiquitin-conjugating enzyme]-L-cysteine + N(6)-ubiquitinyl-[acceptor protein]-L-lysine.. It functions in the pathway protein modification; protein ubiquitination. RING-type ubiquitin E3 ligase required for seed germination and post-germination growth. The protein is BRAP2 RING ZnF UBP domain-containing protein 1 of Arabidopsis thaliana (Mouse-ear cress).